A 228-amino-acid polypeptide reads, in one-letter code: UPF0758 protein CLB_3028 (228 aa).

The region spanning 106 to 228 (KISTPLDVSN…YVSMKEKGTI (123 aa)) is the MPN domain. Zn(2+)-binding residues include histidine 177, histidine 179, and aspartate 190. A JAMM motif motif is present at residues 177 to 190 (HNHPSGDPTPSKED).

The protein belongs to the UPF0758 family.

In Clostridium botulinum (strain ATCC 19397 / Type A), this protein is UPF0758 protein CLB_3028.